Here is a 203-residue protein sequence, read N- to C-terminus: Proteasome subunit beta 2 (203 aa).

Positions 1-9 (MGEEVQIGA) are cleaved as a propeptide — removed in mature form; by autocatalysis. The active-site Nucleophile is the T10.

This sequence belongs to the peptidase T1B family. In terms of assembly, the 20S proteasome core is composed of 14 alpha and 14 beta subunits that assemble into four stacked heptameric rings, resulting in a barrel-shaped structure. The two inner rings, each composed of seven catalytic beta subunits, are sandwiched by two outer rings, each composed of seven alpha subunits. The catalytic chamber with the active sites is on the inside of the barrel. Has a gated structure, the ends of the cylinder being occluded by the N-termini of the alpha-subunits. Is capped at one or both ends by the proteasome regulatory ATPase, PAN.

The protein resides in the cytoplasm. The catalysed reaction is Cleavage of peptide bonds with very broad specificity.. The formation of the proteasomal ATPase PAN-20S proteasome complex, via the docking of the C-termini of PAN into the intersubunit pockets in the alpha-rings, triggers opening of the gate for substrate entry. Interconversion between the open-gate and close-gate conformations leads to a dynamic regulation of the 20S proteasome proteolysis activity. Component of the proteasome core, a large protease complex with broad specificity involved in protein degradation. This is Proteasome subunit beta 2 from Pyrobaculum aerophilum (strain ATCC 51768 / DSM 7523 / JCM 9630 / CIP 104966 / NBRC 100827 / IM2).